A 168-amino-acid polypeptide reads, in one-letter code: Large ribosomal subunit protein uL10 (168 aa).

It belongs to the universal ribosomal protein uL10 family. As to quaternary structure, part of the ribosomal stalk of the 50S ribosomal subunit. The N-terminus interacts with L11 and the large rRNA to form the base of the stalk. The C-terminus forms an elongated spine to which L12 dimers bind in a sequential fashion forming a multimeric L10(L12)X complex.

Forms part of the ribosomal stalk, playing a central role in the interaction of the ribosome with GTP-bound translation factors. In Acinetobacter baylyi (strain ATCC 33305 / BD413 / ADP1), this protein is Large ribosomal subunit protein uL10.